Here is a 909-residue protein sequence, read N- to C-terminus: Glucan endo-1,3-beta-D-glucosidase ARB_01444 (909 aa).

The N-terminal stretch at methionine 1–alanine 23 is a signal peptide. The segment at lysine 136–threonine 187 is disordered. Over residues tyrosine 155 to glutamine 180 the composition is skewed to polar residues. Asparagine 159, asparagine 239, and asparagine 259 each carry an N-linked (GlcNAc...) asparagine glycan. The tract at residues glutamine 191–proline 430 is beta-sandwich subdomain. The GH81 domain occupies glutamine 191–leucine 909. Residues serine 431 to asparagine 524 are alpha/beta subdomain. The (alpha/beta)6 barrel subdomain stretch occupies residues serine 539–leucine 909. Aspartate 654 is an active-site residue. Histidine 658, aspartate 727, glutamate 729, and glutamate 733 together coordinate (1,3-beta-D-glucosyl)n. Active-site residues include glutamate 729 and glutamate 733. The interval lysine 798 to aspartate 800 is may provide specificity for triple-helical beta-glucan. Tyrosine 811 contacts (1,3-beta-D-glucosyl)n.

This sequence belongs to the glycosyl hydrolase 81 family.

The protein resides in the secreted. The protein localises to the cell wall. The enzyme catalyses Hydrolysis of (1-&gt;3)-beta-D-glucosidic linkages in (1-&gt;3)-beta-D-glucans.. In terms of biological role, cleaves internal linkages in 1,3-beta-glucan. Probably involved in cell separation after cytokinesis. In Arthroderma benhamiae (strain ATCC MYA-4681 / CBS 112371) (Trichophyton mentagrophytes), this protein is Glucan endo-1,3-beta-D-glucosidase ARB_01444.